Consider the following 843-residue polypeptide: Neuroligin-1 (843 aa).

The signal sequence occupies residues 1 to 45; it reads MALPRCMWPNYVWRAMMACVVHRGSGAPLTLCLLGCLLQTFHVLS. Residues 46 to 697 are Extracellular-facing; sequence QKLDDVDPLV…DQRDYSTELS (652 aa). A glycan (N-linked (GlcNAc...) (complex) asparagine) is linked at Asn109. Residues Cys117 and Cys153 are joined by a disulfide bond. Residues 167-190 form a disordered region; the sequence is LTKKHTDDLGDNDGAEDEDIRDSG. The segment covering 175–186 has biased composition (acidic residues); the sequence is LGDNDGAEDEDI. N-linked (GlcNAc...) (complex) asparagine glycans are attached at residues Asn303 and Asn343. 2 disulfide bridges follow: Cys342–Cys353 and Cys512–Cys546. A glycan (N-linked (GlcNAc...) asparagine) is linked at Asn547. Positions 647–688 are disordered; the sequence is TKVPSTDITLRPTRKNSTPVTSAFPTAKQDDPKQQPSPFSVD. Polar residues predominate over residues 661–670; sequence KNSTPVTSAF. 2 O-linked (GalNAc...) serine glycosylation sites follow: Ser683 and Ser686. A helical membrane pass occupies residues 698 to 718; the sequence is VTIAVGASLLFLNILAFAALY. Residues 719 to 843 are Cytoplasmic-facing; it reads YKKDKRRHDV…HPHSHSTTRV (125 aa). The interval 822-843 is disordered; it reads GGQNNTLPHPHPHPHSHSTTRV. A compositionally biased stretch (basic residues) spans 831–843; it reads PHPHPHSHSTTRV.

Belongs to the type-B carboxylesterase/lipase family. As to quaternary structure, interacts with neurexins NRXN1, NRXN2 and NRXN3. Interaction with neurexins is mediated by heparan sulfate glycan modification on neurexin. Interacts (via its C-terminus) with DLG4/PSD-95 (via PDZ domain 3). Interacts with AIP1, GOPC and PDZRN3. Interacts with NLGN3. As to expression, brain and arteries (at protein level). Expressed in olfactory bulb. Detected in brain.

It is found in the cell membrane. The protein resides in the postsynaptic density. Its subcellular location is the synaptic cleft. The protein localises to the synaptic cell membrane. Functionally, cell surface protein involved in cell-cell-interactions via its interactions with neurexin family members. Plays a role in synapse function and synaptic signal transmission, and probably mediates its effects by recruiting and clustering other synaptic proteins. May promote the initial formation of synapses, but is not essential for this. In vitro, triggers the de novo formation of presynaptic structures. May be involved in specification of excitatory synapses. Required to maintain wakefulness quality and normal synchrony of cerebral cortex activity during wakefulness and sleep. The protein is involved in nervous system development. This Mus musculus (Mouse) protein is Neuroligin-1 (Nlgn1).